The sequence spans 288 residues: ATP synthase gamma chain 1 (288 aa).

The protein belongs to the ATPase gamma chain family. As to quaternary structure, F-type ATPases have 2 components, CF(1) - the catalytic core - and CF(0) - the membrane proton channel. CF(1) has five subunits: alpha(3), beta(3), gamma(1), delta(1), epsilon(1). CF(0) has three main subunits: a, b and c.

Its subcellular location is the cell inner membrane. Functionally, produces ATP from ADP in the presence of a proton gradient across the membrane. The gamma chain is believed to be important in regulating ATPase activity and the flow of protons through the CF(0) complex. The sequence is that of ATP synthase gamma chain 1 from Photobacterium profundum (strain SS9).